Reading from the N-terminus, the 548-residue chain is LDL receptor repeat-containing protein egg-2 (548 aa).

Topologically, residues 1–49 (MSQQAGNAQRGRFDEEPMSLGEKISHRMDQLKEIVSSSCPCAGKFPPVA) are cytoplasmic. Residues 50–70 (IVLIVALIILGVIIAVPLVIF) traverse the membrane as a helical; Signal-anchor for type II membrane protein segment. Residues 71 to 548 (LSPSAQAMSS…LALKNSGLRP (478 aa)) are Extracellular-facing. A glycan (N-linked (GlcNAc...) asparagine) is linked at N119. LDL-receptor class A domains follow at residues 122-160 (TCSG…ENCK), 161-213 (ECQS…ASCR), 215-252 (KCSK…SNCN), 253-288 (KCQK…HQCD), 291-328 (TCSG…ENCP), 370-412 (KCDP…KKCT), 416-454 (ECVV…KGCD), and 455-492 (KCPS…HKCS). Cystine bridges form between C130–C150, C144–C159, C162–C190, C168–C203, C197–C212, C216–C229, C223–C242, C236–C251, C254–C265, C261–C278, C272–C287, C292–C305, C300–C318, C312–C327, C371–C389, C379–C402, C396–C411, C417–C431, C427–C444, C438–C453, C456–C469, C463–C482, and C476–C491. N-linked (GlcNAc...) asparagine glycosylation occurs at N244. A glycan (N-linked (GlcNAc...) asparagine) is linked at N527.

It localises to the cell membrane. The protein resides in the endosome membrane. Functionally, probable receptor which is required for the oocyte-to-zygote transition although its exact function is controversial. Redundantly with egg-1, seems to be required for fertilization probably by promoting the interaction or fusion between sperm and oocyte. Conversely, shown to be dispensable for fertilization but required together with egg-1 for the formation of a continuous and cohesive eggshell chitin layer by maintaining a homogenous distribution of chitin synthase chs-1 at the unfertilized oocyte cell membrane. Appears to recruit or maintain together to the unfertilized oocyte cortex several proteins including chs-1, kinase mbk-2 and pseudophosphatase egg-3, and possibly egg-4 and egg-5. This chain is LDL receptor repeat-containing protein egg-2, found in Caenorhabditis elegans.